Consider the following 639-residue polypeptide: CD2-associated protein (639 aa).

The SH3 1; truncated domain occupies 1–59 (MVDYIVEYDYDAVHDDELTIRVGEIIRNVKKLQEEGWLEGELNGRRGMFPDNFVKEIKR). Residues 1–175 (MVDYIVEYDY…EVTDDGETHE (175 aa)) are interaction with ANLN and localization to the midbody. K58 participates in a covalent cross-link: Glycyl lysine isopeptide (Lys-Gly) (interchain with G-Cter in SUMO2). Phosphoserine occurs at positions 67, 80, and 86. The SH3 2 domain maps to 108 to 167 (TKKRQCKVLFEYIPQNEDELELKVGDIIDINEEVEEGWWSGTLNNKLGLFPSNFVKELEV). Over residues 168 to 177 (TDDGETHEAQ) the composition is skewed to basic and acidic residues. Residues 168–209 (TDDGETHEAQDDSETVLAGPTSPIPSLGNVSETASGSVTQPK) are disordered. Residues 195–207 (GNVSETASGSVTQ) show a composition bias toward polar residues. At S224 the chain carries Phosphoserine. The interval 227–256 (LRTRTSSSETEEKKPEKPLILQSLGPKTQS) is disordered. In terms of domain architecture, SH3 3 spans 269–330 (KAKEYCRTLF…PDNFAVQINE (62 aa)). Residues 333-428 (KDFPKPKKPP…PPPPIAKING (96 aa)) form a disordered region. 3 consecutive short sequence motifs (SH3-binding) follow at residues 336–352 (PKPKKPPPPAKAPAPKP), 378–397 (KPSKPAAPQVPPKKPTPPTK), and 410–422 (PKRPEKPVPPPPP). The segment covering 341-351 (PPPPAKAPAPK) has biased composition (pro residues). Over residues 356–379 (AAEKKYFSLKPEEKDEKSTLEQKP) the composition is skewed to basic and acidic residues. Residues 385-395 (PQVPPKKPTPP) show a composition bias toward pro residues. Phosphoserine occurs at positions 458, 463, 469, 510, and 514. K523 participates in a covalent cross-link: Glycyl lysine isopeptide (Lys-Gly) (interchain with G-Cter in SUMO2). T565 is subject to Phosphothreonine. Residues 577-638 (DVKKNSLDEL…IEKLKKAVLS (62 aa)) adopt a coiled-coil conformation. A Phosphoserine modification is found at S582.

As to quaternary structure, homodimer. Interacts with F-actin, PKD2, NPHS1 and NPHS2. Interacts with WTIP. Interacts with DDN; interaction is direct. Interacts (via SH3 2 domain) with CBL (via phosphorylated C-terminus). Interacts with BCAR1/p130Cas (via SH3 domain). Interacts with MVB12A and ARHGAP17. Interacts with ANLN, CD2 and CBLB. Interacts with PDCD6IP and TSG101. Interacts with RIN3. Interacts directly with RET (inactive) and CBLC; upon RET activation by GDNF suggested to dissociate from RET as CBLC:CD2AP complex. Interacts with CGNL1 and SH3BP1; probably part of a complex at cell junctions. Interacts with CAPZA1. In terms of assembly, (Microbial infection) Interacts (via SH3 domains) with Chikungunya virus non-structural protein 3 (via C-terminus); this interaction plays a role in initiation of viral replication. In terms of processing, phosphorylated on tyrosine residues; probably by c-Abl, Fyn and c-Src. Widely expressed in fetal and adult tissues.

The protein resides in the cytoplasm. It is found in the cytoskeleton. The protein localises to the cell projection. It localises to the ruffle. Its subcellular location is the cell junction. Its function is as follows. Seems to act as an adapter protein between membrane proteins and the actin cytoskeleton. In collaboration with CBLC, modulates the rate of RET turnover and may act as regulatory checkpoint that limits the potency of GDNF on neuronal survival. Controls CBLC function, converting it from an inhibitor to a promoter of RET degradation. May play a role in receptor clustering and cytoskeletal polarity in the junction between T-cell and antigen-presenting cell. May anchor the podocyte slit diaphragm to the actin cytoskeleton in renal glomerolus. Also required for cytokinesis. Plays a role in epithelial cell junctions formation. The chain is CD2-associated protein (CD2AP) from Homo sapiens (Human).